The chain runs to 586 residues: Maltogenic alpha-amylase (586 aa).

Residues Asn147, Asn152, Asp153, Gly172, and Asp174 each contribute to the Ca(2+) site. Substrate contacts are provided by His247 and Arg326. Asp328 serves as the catalytic Nucleophile. Residue Glu357 is the Proton donor of the active site. Substrate-binding positions include 423–424 (HD), Asp468, and Arg472.

This sequence belongs to the glycosyl hydrolase 13 family. Ca(2+) is required as a cofactor.

It catalyses the reaction hydrolysis of (1-&gt;4)-alpha-D-glucosidic linkages in polysaccharides so as to remove successive alpha-maltose residues from the non-reducing ends of the chains.. In terms of biological role, converts starch into maltose. This chain is Maltogenic alpha-amylase, found in Bacillus acidopullulyticus.